Reading from the N-terminus, the 187-residue chain is Thermosensitive gluconokinase (187 aa).

An ATP-binding site is contributed by 10–17; the sequence is GVSGSGKT.

This sequence belongs to the gluconokinase GntK/GntV family.

It carries out the reaction D-gluconate + ATP = 6-phospho-D-gluconate + ADP + H(+). Its pathway is carbohydrate acid metabolism; L-idonate degradation. The sequence is that of Thermosensitive gluconokinase (idnK) from Escherichia coli (strain K12).